Reading from the N-terminus, the 220-residue chain is Homeobox-leucine zipper protein ATHB-21 (220 aa).

The interval 26 to 48 is disordered; that stretch reads VPQQGGEAKPTRRRKRKSKSVVV. The segment at residues 58-117 is a DNA-binding region (homeobox); it reads GWFRKRKLSDEQVRMLEISFEDDHKLESERKDRLASELGLDPRQVAVWFQNRRARWKNKR. The interval 118–146 is leucine-zipper; the sequence is VEDEYTKLKNAYETTVVEKCRLDSEVIHL.

This sequence belongs to the HD-ZIP homeobox family. Class I subfamily. As to expression, widely expressed.

Its subcellular location is the nucleus. Functionally, probable transcription factor. The polypeptide is Homeobox-leucine zipper protein ATHB-21 (ATHB-21) (Arabidopsis thaliana (Mouse-ear cress)).